An 83-amino-acid chain; its full sequence is MGSSRLMITFIVVAMLAISSDLFSVQIGISVQAAPPTCGRDCTEKFLTQDCDKYCVGLSYKKGVCILSEGLPPKTSTYRCCCS.

A signal peptide spans 1–22 (MGSSRLMITFIVVAMLAISSDL). Intrachain disulfides connect Cys-38–Cys-82, Cys-42–Cys-65, Cys-51–Cys-80, and Cys-55–Cys-81.

The protein belongs to the DEFL family.

It localises to the secreted. The protein is Putative defensin-like protein 66 of Arabidopsis thaliana (Mouse-ear cress).